Reading from the N-terminus, the 301-residue chain is UDP-N-acetylenolpyruvoylglucosamine reductase 1 (301 aa).

The region spanning 29 to 196 (KIGGPADILI…LEAEFQLQIG (168 aa)) is the FAD-binding PCMH-type domain. The active site involves arginine 174. Serine 225 (proton donor) is an active-site residue. Glutamate 295 is an active-site residue.

This sequence belongs to the MurB family. The cofactor is FAD.

The protein localises to the cytoplasm. The enzyme catalyses UDP-N-acetyl-alpha-D-muramate + NADP(+) = UDP-N-acetyl-3-O-(1-carboxyvinyl)-alpha-D-glucosamine + NADPH + H(+). The protein operates within cell wall biogenesis; peptidoglycan biosynthesis. Functionally, cell wall formation. This Bacillus cereus (strain ZK / E33L) protein is UDP-N-acetylenolpyruvoylglucosamine reductase 1.